A 156-amino-acid polypeptide reads, in one-letter code: Small ribosomal subunit protein uS7 (156 aa).

This sequence belongs to the universal ribosomal protein uS7 family. As to quaternary structure, part of the 30S ribosomal subunit. Contacts proteins S9 and S11.

Its function is as follows. One of the primary rRNA binding proteins, it binds directly to 16S rRNA where it nucleates assembly of the head domain of the 30S subunit. Is located at the subunit interface close to the decoding center, probably blocks exit of the E-site tRNA. The sequence is that of Small ribosomal subunit protein uS7 from Baumannia cicadellinicola subsp. Homalodisca coagulata.